The chain runs to 444 residues: Putative zinc metalloprotease PD_0327 (444 aa).

His-22 provides a ligand contact to Zn(2+). Glu-23 is an active-site residue. Position 26 (His-26) interacts with Zn(2+). Residues 98–120 (IAIVAAGPLANLLLCMLLLWVLF) form a helical membrane-spanning segment. Residues 192–278 (TLELSKLKQP…HPGMIEIRRG (87 aa)) form the PDZ domain. 2 helical membrane passes run 371 to 393 (VGWF…LFPI) and 418 to 440 (AMAA…AFYN).

This sequence belongs to the peptidase M50B family. It depends on Zn(2+) as a cofactor.

It localises to the cell inner membrane. This is Putative zinc metalloprotease PD_0327 from Xylella fastidiosa (strain Temecula1 / ATCC 700964).